Consider the following 265-residue polypeptide: Ribonuclease 3 (265 aa).

In terms of domain architecture, RNase III spans 34-157 (LAVLTRKLGY…LIGAIYLDSQ (124 aa)). Glu-70 provides a ligand contact to Mg(2+). Asp-74 is a catalytic residue. 2 residues coordinate Mg(2+): Asp-143 and Glu-146. Residue Glu-146 is part of the active site. The DRBM domain occupies 185–256 (DAKSRLQEWL…AELMINQLHK (72 aa)).

This sequence belongs to the ribonuclease III family. In terms of assembly, homodimer. Mg(2+) is required as a cofactor.

It localises to the cytoplasm. It catalyses the reaction Endonucleolytic cleavage to 5'-phosphomonoester.. Digests double-stranded RNA. Involved in the processing of primary rRNA transcript to yield the immediate precursors to the large and small rRNAs (23S and 16S). Processes some mRNAs, and tRNAs when they are encoded in the rRNA operon. Processes pre-crRNA and tracrRNA of type II CRISPR loci if present in the organism. In Psychrobacter arcticus (strain DSM 17307 / VKM B-2377 / 273-4), this protein is Ribonuclease 3.